The following is a 426-amino-acid chain: Probable imidazolonepropionase (426 aa).

4-imidazolone-5-propanoate-binding residues include Y159 and H192. Residue Y159 participates in N-formimidoyl-L-glutamate binding. H260 is a binding site for Fe(3+). H260 contributes to the Zn(2+) binding site. E263 serves as a coordination point for 4-imidazolone-5-propanoate. A Fe(3+)-binding site is contributed by D334. D334 provides a ligand contact to Zn(2+). N-formimidoyl-L-glutamate is bound at residue N336.

Belongs to the metallo-dependent hydrolases superfamily. HutI family. The cofactor is Zn(2+). Requires Fe(3+) as cofactor.

It carries out the reaction 4-imidazolone-5-propanoate + H2O = N-formimidoyl-L-glutamate. It participates in amino-acid degradation; L-histidine degradation into L-glutamate; N-formimidoyl-L-glutamate from L-histidine: step 3/3. The protein is Probable imidazolonepropionase (AMDHD1) of Homo sapiens (Human).